Reading from the N-terminus, the 123-residue chain is Small ribosomal subunit protein bS16 (123 aa).

The protein belongs to the bacterial ribosomal protein bS16 family.

The polypeptide is Small ribosomal subunit protein bS16 (Treponema pallidum (strain Nichols)).